The following is a 520-amino-acid chain: Cholesterol side-chain cleavage enzyme, mitochondrial (520 aa).

Residues 1 to 39 (MLVRGLPLRSVLVKGCQPLLSAPREGPGHPRVPTGEGAG) constitute a mitochondrion transit peptide. Residues 19 to 47 (LLSAPREGPGHPRVPTGEGAGMSSHSPRP) form a disordered region. A heme-binding site is contributed by C461.

This sequence belongs to the cytochrome P450 family. In terms of assembly, interacts with FDX1/adrenodoxin. The cofactor is heme.

It is found in the mitochondrion inner membrane. The catalysed reaction is 6 reduced [adrenodoxin] + cholesterol + 3 O2 + 6 H(+) = 4-methylpentanal + pregnenolone + 6 oxidized [adrenodoxin] + 4 H2O. It catalyses the reaction 2 reduced [adrenodoxin] + cholesterol + O2 + 2 H(+) = (22R)-hydroxycholesterol + 2 oxidized [adrenodoxin] + H2O. It carries out the reaction (22R)-hydroxycholesterol + 2 reduced [adrenodoxin] + O2 + 2 H(+) = (20R,22R)-20,22-dihydroxycholesterol + 2 oxidized [adrenodoxin] + H2O. The enzyme catalyses (20R,22R)-20,22-dihydroxycholesterol + 2 reduced [adrenodoxin] + O2 + 2 H(+) = 4-methylpentanal + pregnenolone + 2 oxidized [adrenodoxin] + 2 H2O. It participates in lipid metabolism; C21-steroid hormone metabolism. It functions in the pathway steroid metabolism; cholesterol metabolism. Its function is as follows. A cytochrome P450 monooxygenase that catalyzes the side-chain hydroxylation and cleavage of cholesterol to pregnenolone, the precursor of most steroid hormones. Catalyzes three sequential oxidation reactions of cholesterol, namely the hydroxylation at C22 followed with the hydroxylation at C20 to yield 20R,22R-hydroxycholesterol that is further cleaved between C20 and C22 to yield the C21-steroid pregnenolone and 4-methylpentanal. Mechanistically, uses molecular oxygen inserting one oxygen atom into a substrate and reducing the second into a water molecule. Two electrons are provided by NADPH via a two-protein mitochondrial transfer system comprising flavoprotein FDXR (adrenodoxin/ferredoxin reductase) and nonheme iron-sulfur protein FDX1 or FDX2 (adrenodoxin/ferredoxin). This chain is Cholesterol side-chain cleavage enzyme, mitochondrial (CYP11A1), found in Equus caballus (Horse).